Here is a 901-residue protein sequence, read N- to C-terminus: HTH-type transcriptional regulator MalT (901 aa).

39–46 (SPAGYGKT) contacts ATP. An HTH luxR-type domain is found at 829-894 (ELIRTSPLTQ…AAVQHAQKLL (66 aa)). The H-T-H motif DNA-binding region spans 853-872 (NEQIAGELEVAATTIKTHIR).

The protein belongs to the MalT family. Monomer in solution. Oligomerizes to an active state in the presence of the positive effectors ATP and maltotriose.

With respect to regulation, activated by ATP and maltotriose, which are both required for DNA binding. Functionally, positively regulates the transcription of the maltose regulon whose gene products are responsible for uptake and catabolism of malto-oligosaccharides. Specifically binds to the promoter region of its target genes, recognizing a short DNA motif called the MalT box. The polypeptide is HTH-type transcriptional regulator MalT (Escherichia coli O6:H1 (strain CFT073 / ATCC 700928 / UPEC)).